A 79-amino-acid polypeptide reads, in one-letter code: Conotoxin Vi6.4 (79 aa).

Positions 1–22 (MKLTCVLIITVLFLTASQLITA) are cleaved as a signal peptide. Residues 23–47 (DYSGDKRQYRAVRLRDEMRNFKGAR) constitute a propeptide that is removed on maturation. 3 cysteine pairs are disulfide-bonded: C49–C62, C56–C67, and C61–C77. Residues P60 and P63 each carry the 4-hydroxyproline modification.

It belongs to the conotoxin O1 superfamily. As to expression, expressed by the venom duct.

The protein resides in the secreted. Functionally, ion channel inhibitor that inhibits the increase in intracellular calcium upon depolarization in DRG neurons. In vivo, both intraperitoneal and intracranial injections into mice induce hyperactivity. This is Conotoxin Vi6.4 from Conus virgo (Virgin cone).